A 218-amino-acid polypeptide reads, in one-letter code: MGQKVHPLGFRLGITKSHSSFWYVERRHYASFVKEDIVIRNFMNKELLETLISLIKIERIYEFSEQRNNTIVYIHVARPERVIGRDGQGLSRIRDILIDRMNYLLGKTPRIITCKVVGVTSPNLDARLLADSVRRELEKRTPFIRAMKTVMLQAMKAGAEGIKVQVSGRLNGIEIARTEWFREGRVPLHTLRADIDYFNDIAHTIYGVLGIKVWVYKV.

A KH type-2 domain is found at 39–120 (IRNFMNKELL…IITCKVVGVT (82 aa)).

It belongs to the universal ribosomal protein uS3 family. In terms of assembly, part of the 30S ribosomal subunit.

The protein localises to the plastid. Its subcellular location is the chloroplast. This Euglena gracilis protein is Small ribosomal subunit protein uS3c (rps3).